The chain runs to 516 residues: Cytochrome P450 93G1 (516 aa).

A helical transmembrane segment spans residues 11-31 (LLGMGTTMGALALALVVVVVV). Residue Cys454 coordinates heme.

It belongs to the cytochrome P450 family. It depends on heme as a cofactor.

It localises to the membrane. The catalysed reaction is a flavanone + reduced [NADPH--hemoprotein reductase] + O2 = a flavone + oxidized [NADPH--hemoprotein reductase] + 2 H2O + H(+). It functions in the pathway secondary metabolite biosynthesis; flavonoid biosynthesis. Functions as a flavone synthase II (FNSII) that catalyzes the direct conversion of flavanones to flavones. In vitro, can convert naringenin and eriodictyol to apigenin and luteolin, respectively. Acts as a key branch point enzyme that channels flavanones to the biosynthesis of soluble tricin O-linked conjugates. In Oryza sativa subsp. japonica (Rice), this protein is Cytochrome P450 93G1.